A 32-amino-acid chain; its full sequence is Potassium channel toxin alpha-KTx 10.2 (32 aa).

3 disulfide bridges follow: cysteine 3/cysteine 22, cysteine 8/cysteine 12, and cysteine 27/cysteine 29. At tyrosine 32 the chain carries Tyrosine amide.

Belongs to the short scorpion toxin superfamily. Potassium channel inhibitor family. Alpha-KTx 10 subfamily. As to expression, expressed by the venom gland.

It localises to the secreted. Blocks Shaker B potassium-channels (Kv1.1/KCNA1 sub-family). This Centruroides noxius (Mexican scorpion) protein is Potassium channel toxin alpha-KTx 10.2.